The sequence spans 602 residues: Potassium voltage-gated channel subfamily A member 5 (602 aa).

The tetramerization domain stretch occupies residues Met-1–Glu-202. The Cytoplasmic segment spans residues Met-1–Gly-238. The interval Glu-58 to Ser-107 is disordered. At Ser-81 the chain carries Phosphoserine; by CK2 and PKA. A Glycyl lysine isopeptide (Lys-Gly) (interchain with G-Cter in SUMO) cross-link involves residue Lys-212. Residues Ser-239–Leu-260 traverse the membrane as a helical segment. At Glu-261–Pro-314 the chain is on the extracellular side. A helical transmembrane segment spans residues Phe-315 to Ala-336. A lipid anchor (S-palmitoyl cysteine) is attached at Cys-337. At Cys-337–Ile-347 the chain is on the cytoplasmic side. Residues Met-348 to Ala-368 form a helical membrane-spanning segment. The Extracellular segment spans residues Glu-369 to Ser-384. A helical; Voltage-sensor membrane pass occupies residues Leu-385 to His-405. Residues Ser-406–Met-420 lie on the Cytoplasmic side of the membrane. The interval Lys-407–Met-420 is S4-S5 linker. A helical transmembrane segment spans residues Arg-421–Tyr-442. At Phe-443–Ile-456 the chain is on the extracellular side. The segment at residues Pro-457 to Thr-468 is an intramembrane region (helical). The Selectivity filter motif lies at Thr-469–Asp-474. The stretch at Thr-469–Arg-476 is an intramembrane region. Residues Pro-477–Lys-483 lie on the Extracellular side of the membrane. Residues Ile-484 to Tyr-512 traverse the membrane as a helical segment. Residues His-513–Leu-602 are Cytoplasmic-facing. Residues Ala-523–Gly-536 are compositionally biased toward basic and acidic residues. Positions Ala-523–Arg-543 are disordered. Lys-525 participates in a covalent cross-link: Glycyl lysine isopeptide (Lys-Gly) (interchain with G-Cter in SUMO). 3 positions are modified to phosphoserine; by PKA: Ser-535, Ser-546, and Ser-569. A PDZ-binding motif is present at residues Thr-600–Leu-602.

The protein belongs to the potassium channel family. A (Shaker) (TC 1.A.1.2) subfamily. Kv1.5/KCNA5 sub-subfamily. Homotetramer and heterotetramer of potassium channel proteins. Interacts with DLG1, which enhances channel currents. Forms a ternary complex with DLG1 and CAV3. Interacts with KCNAB1. Interacts with UBE2I. Interacts with XIRP2; the interaction is required for normal action potential configuration in the heart. Post-translationally, glycosylated. Sumoylated on Lys-212, and Lys-525, preferentially with SUMO3. Sumoylation regulates the voltage sensitivity of the channel. In terms of tissue distribution, expressed equally in atrium, ventricle, aorta and skeletal muscle. Weaker expression in brain.

Its subcellular location is the cell membrane. It carries out the reaction K(+)(in) = K(+)(out). Voltage-gated potassium channel that mediates transmembrane potassium transport in excitable membranes. Forms tetrameric potassium-selective channels through which potassium ions pass in accordance with their electrochemical gradient. The channel alternates between opened and closed conformations in response to the voltage difference across the membrane. Can form functional homotetrameric channels and heterotetrameric channels that contain variable proportions of KCNA1, KCNA2, KCNA4, KCNA5, and possibly other family members as well; channel properties depend on the type of alpha subunits that are part of the channel. Channel properties are modulated by cytoplasmic beta subunits that regulate the subcellular location of the alpha subunits and promote rapid inactivation. Homotetrameric channels display rapid activation and slow inactivation. Required for normal electrical conduction including formation of the infranodal ventricular conduction system and normal action potential configuration, as a result of its interaction with XIRP2. May play a role in regulating the secretion of insulin in normal pancreatic islets. The protein is Potassium voltage-gated channel subfamily A member 5 (Kcna5) of Rattus norvegicus (Rat).